Reading from the N-terminus, the 328-residue chain is Malate dehydrogenase (328 aa).

Residue 12–18 (GAAGQIA) coordinates NAD(+). Substrate is bound by residues Arg-93 and Arg-99. NAD(+) is bound by residues Asn-106, Gln-113, and 130–132 (VGN). Residues Asn-132 and Arg-163 each coordinate substrate. The active-site Proton acceptor is His-188.

Belongs to the LDH/MDH superfamily. MDH type 2 family.

It carries out the reaction (S)-malate + NAD(+) = oxaloacetate + NADH + H(+). Functionally, catalyzes the reversible oxidation of malate to oxaloacetate. This Burkholderia cenocepacia (strain ATCC BAA-245 / DSM 16553 / LMG 16656 / NCTC 13227 / J2315 / CF5610) (Burkholderia cepacia (strain J2315)) protein is Malate dehydrogenase.